The sequence spans 148 residues: Small ribosomal subunit protein eS19 (148 aa).

The protein belongs to the eukaryotic ribosomal protein eS19 family. As to quaternary structure, part of the 30S ribosomal subunit.

Its function is as follows. May be involved in maturation of the 30S ribosomal subunit. This is Small ribosomal subunit protein eS19 from Methanocaldococcus jannaschii (strain ATCC 43067 / DSM 2661 / JAL-1 / JCM 10045 / NBRC 100440) (Methanococcus jannaschii).